Consider the following 495-residue polypeptide: Aspartyl/glutamyl-tRNA(Asn/Gln) amidotransferase subunit B (495 aa).

It belongs to the GatB/GatE family. GatB subfamily. In terms of assembly, heterotrimer of A, B and C subunits.

It carries out the reaction L-glutamyl-tRNA(Gln) + L-glutamine + ATP + H2O = L-glutaminyl-tRNA(Gln) + L-glutamate + ADP + phosphate + H(+). The enzyme catalyses L-aspartyl-tRNA(Asn) + L-glutamine + ATP + H2O = L-asparaginyl-tRNA(Asn) + L-glutamate + ADP + phosphate + 2 H(+). Functionally, allows the formation of correctly charged Asn-tRNA(Asn) or Gln-tRNA(Gln) through the transamidation of misacylated Asp-tRNA(Asn) or Glu-tRNA(Gln) in organisms which lack either or both of asparaginyl-tRNA or glutaminyl-tRNA synthetases. The reaction takes place in the presence of glutamine and ATP through an activated phospho-Asp-tRNA(Asn) or phospho-Glu-tRNA(Gln). The chain is Aspartyl/glutamyl-tRNA(Asn/Gln) amidotransferase subunit B from Prochlorococcus marinus (strain MIT 9313).